Here is a 1312-residue protein sequence, read N- to C-terminus: MSRIEKMSTLGVRSFGIEDKDKQIISFFSPLTILVGPNGAGKTTIIECLKYICTGDFPPGTKGNTFVHDPKVAQETDVRAQIRLQFRDVNGEMVLVQRSMLCSQKSKKTEFKTLEGVITRIKHGEKVSLSSKCAEIDREMISCLGVSKSVLNNVIFCHQEDSNWPLSEGKALKQKFDEIFSATRYIKALDTLRQVRQTQGQKVKECQTELKYLRQNKEKACEIRDQITSKEAQLASSREIVKAYENELEPLKNRLKEIEHNLSKIMRLDNEIKALDSRKKQMEKDNSELEQKMEKVFQGTDEQLNDLYHNHQRTVREKERRLVDCQRELEKLSKEARLLNQERAELLVEQGRLQLQADRHQEHIRARDSLIQSLAAHLELDGFERGPFSERQIKNFHELVRERQEREAKTASQLLSDLTDKEALKQRQMDEMRDKKSGLGRMIELKTEILTKKQTELRNVRNELQQLEGSSDRILELDQELTKAERELSKAEKNSSIETLKAEILNLQSEKADLDRNLRKLDQEMEQLNHHTTTRTQMEMLTKDKTDKDEQIRKIKSRHSDELTSLLGYFPNKKQLEDWLHSKSKEINQTRDRLAKLNKELASAEQNKNHINNELKKKEEQLSSYEDKLFDVCGSQDFESDLDRLKEDIEKSSKQRAMLAGATAVYSQFITQLTDENQSCCPGCQRVFQTEAELQEVISDLQSKLRLAPDKLKSTESELKKKERRRDEMLGLVPMRQSIIDLKEKEIPELRNRLQSVNRDIQRLKNDIEEQETLLGTVMPEEESAKVCLTDVTIMERFQMELKDVERKIAQQAAKLQGVDLDRTVQQVNQEKQEKQHKLDTVSSKIELNRKLIQDQQEQIQHLKSKTNELKSEKLQIATNLQRRQQMEEQTVELSTEVQSLNREIKDAKEQINPLEIALEKLQQEKEELIHRKNTSNKMAQDKINDIKEKVKNIHGYMKDIENYIQDGKDDYKKQKETELNEVVIQLNECDKHKEKINKEMGTMRQDIDTKKIQERWLQDNLTLRKRREELKEVEEERKQHLKEMGQMQVLQMKNEHQKLEENIDTIKRNHSLALGRQKGYEEEILHFKKELREPQFRDAEEKYREMMIVMRTTELVNKDLDIYYKTLDHAIMKFHSMKMEEINKIIRDLWRSTYRGQDIEYIEIRSDADENVSASDKRRNYNYRVVMLKGDTALDMRGRCSAGQKVLASLIIRLALAETFCLNCGILALDEPTTNLDRENIESLAHALVEIIKSRSQQRNFQLLVITHDEDFVELLGRSEYVEKFYRVKKNIDQCSEIVKSSINSLGSYVH.

The ATP site is built by R13, N38, G39, G41, K42, T43, T44, V67, D69, and Q159. Position 43 (T43) interacts with Mg(2+). Q159 lines the Mg(2+) pocket. Coiled-coil stretches lie at residues 200–534 (GQKV…HTTT) and 635–673 (SQDFESDLDRLKEDIEKSSKQRAMLAGATAVYSQFITQL). S635 bears the Phosphoserine mark. Residues 635-734 (SQDFESDLDR…RRDEMLGLVP (100 aa)) form the Zinc-hook domain. Residues C681 and C684 each contribute to the Zn(2+) site. T690 carries the phosphothreonine modification. 2 coiled-coil regions span residues 706 to 734 (RLAPDKLKSTESELKKKERRRDEMLGLVP) and 754 to 954 (LQSV…VKNI). K959 carries the N6-acetyllysine modification. Residues 1019–1075 (QDNLTLRKRREELKEVEEERKQHLKEMGQMQVLQMKNEHQKLEENIDTIKRNHSLAL) adopt a coiled-coil conformation.

This sequence belongs to the SMC family. RAD50 subfamily. As to quaternary structure, component of the MRN complex composed of two heterodimers RAD50 and MRE11 associated with a single NBN. The MRN complexes dimerize on DNA to form joined MRN-MRN oligomers required for DNA double-strand break repair. As part of the MRN complex, interacts with MCM8 and MCM9; the interaction recruits the complex to DNA repair sites. Component of the BASC complex, at least composed of BRCA1, MSH2, MSH6, MLH1, ATM, BLM, RAD50, MRE11 and NBN. Found in a complex with TERF2. Interacts with RINT1. Interacts with BRCA1 via its N-terminal domain. Interacts with DCLRE1C/Artemis. Interacts with MRNIP. Interacts with CYREN (via XLF motif). Interacts with C1QBP and MRE11; interaction takes place in absence of DNA damage to form the MRC (MRE11-RAD50-C1QBP) complex that inhibits the activity of MRE11. Zn(2+) is required as a cofactor. Post-translationally, phosphorylation at Ser-635 by ATM in response to DNA damage is required for double-strand break (DSB) repair. Present at low levels in the heart at fetal-day 17, at relatively constant levels at postnatal days 10, 17 and 21 and at slightly lower levels in the adult heart. Detected in liver, kidney and lung. Barely detectable in skeletal muscle with slightly higher levels observed in brain and the ventricles of the heart (at protein level).

The protein resides in the nucleus. Its subcellular location is the chromosome. It is found in the telomere. It catalyses the reaction ATP + H2O = ADP + phosphate + H(+). Component of the MRN complex, which plays a central role in double-strand break (DSB) repair, DNA recombination, maintenance of telomere integrity and meiosis. The MRN complex is involved in the repair of DNA double-strand breaks (DSBs) via homologous recombination (HR), an error-free mechanism which primarily occurs during S and G2 phases. The complex (1) mediates the end resection of damaged DNA, which generates proper single-stranded DNA, a key initial steps in HR, and is (2) required for the recruitment of other repair factors and efficient activation of ATM and ATR upon DNA damage. The MRN complex possesses single-strand endonuclease activity and double-strand-specific 3'-5' exonuclease activity, which are provided by MRE11, to initiate end resection, which is required for single-strand invasion and recombination. Within the complex, RAD50 is both required to bind DNA ends and hold them in close proximity and regulate the activity of MRE11. RAD50 provides an ATP-dependent control of MRE11 by positioning DNA ends into the MRE11 active site: ATP-binding induces a large structural change from an open form with accessible MRE11 nuclease sites into a closed form. The MRN complex is also required for DNA damage signaling via activation of the ATM and ATR kinases: the nuclease activity of MRE11 is not required to activate ATM and ATR. The MRN complex is also required for the processing of R-loops. In telomeres the MRN complex may modulate t-loop formation. The polypeptide is DNA repair protein RAD50 (Rad50) (Rattus norvegicus (Rat)).